Here is a 376-residue protein sequence, read N- to C-terminus: Ribonuclease D (376 aa).

In terms of domain architecture, 3'-5' exonuclease spans 8 to 176 (IQWIRDDASL…VYLALDARLS (169 aa)). The HRDC domain occupies 214–294 (RPQQLAVLRE…AEAARLPQSE (81 aa)).

The protein belongs to the RNase D family. A divalent metal cation serves as cofactor.

The protein resides in the cytoplasm. It catalyses the reaction Exonucleolytic cleavage that removes extra residues from the 3'-terminus of tRNA to produce 5'-mononucleotides.. Functionally, exonuclease involved in the 3' processing of various precursor tRNAs. Initiates hydrolysis at the 3'-terminus of an RNA molecule and releases 5'-mononucleotides. This chain is Ribonuclease D, found in Pseudomonas paraeruginosa (strain DSM 24068 / PA7) (Pseudomonas aeruginosa (strain PA7)).